Here is a 457-residue protein sequence, read N- to C-terminus: RNA-binding suppressor of PAS kinase protein 1 (457 aa).

Positions 26 to 88 (RIFIIELENS…SCVILFKGEN (63 aa)) constitute an R3H domain. Disordered stretches follow at residues 142-181 (IDGN…IEKE), 195-291 (LNKS…NGGY), and 406-457 (FQGK…KLNI). Residues 145–158 (NTRTPNSNLTANSN) show a composition bias toward polar residues. Basic and acidic residues predominate over residues 159–181 (KDQKIEIDDKSSTDLEQERIEKE). Residue S198 is modified to Phosphoserine. A compositionally biased stretch (low complexity) spans 226 to 247 (SNTQTSNGSVSSSSPFNSSVTT). Residues 248-258 (IQVNKPQQQFY) show a composition bias toward polar residues. Over residues 418–435 (KRSDDSNSNKNEGIRRAS) the composition is skewed to basic and acidic residues. Phosphoserine occurs at positions 435, 439, and 447. The segment covering 443-457 (RDTDSVEMKFDKLNI) has biased composition (basic and acidic residues).

It is found in the cytoplasm. The polypeptide is RNA-binding suppressor of PAS kinase protein 1 (RBS1) (Saccharomyces cerevisiae (strain ATCC 204508 / S288c) (Baker's yeast)).